The chain runs to 717 residues: uncharacterized protein (717 aa).

The protein belongs to the asfivirus C717R family.

It is found in the virion. This is an uncharacterized protein from African swine fever virus (strain Badajoz 1971 Vero-adapted) (Ba71V).